Here is a 714-residue protein sequence, read N- to C-terminus: Polyribonucleotide nucleotidyltransferase (714 aa).

The Mg(2+) site is built by Asp486 and Asp492. The region spanning 553 to 612 (PRIITMKINPEKIRDVIGKGGAVIRALTEETGTTIDIEEDGTIKIGCTSAEAGEEAKKRI) is the KH domain. In terms of domain architecture, S1 motif spans 622–690 (GQVYDGTVLK…DKGRVRLSAK (69 aa)).

The protein belongs to the polyribonucleotide nucleotidyltransferase family. The cofactor is Mg(2+).

It localises to the cytoplasm. It catalyses the reaction RNA(n+1) + phosphate = RNA(n) + a ribonucleoside 5'-diphosphate. In terms of biological role, involved in mRNA degradation. Catalyzes the phosphorolysis of single-stranded polyribonucleotides processively in the 3'- to 5'-direction. The sequence is that of Polyribonucleotide nucleotidyltransferase from Methylobacillus flagellatus (strain ATCC 51484 / DSM 6875 / VKM B-1610 / KT).